The sequence spans 876 residues: Alanine--tRNA ligase (876 aa).

The residue at position 74 (Lys-74) is an N6-acetyllysine. Residues His-564, His-568, Cys-666, and His-670 each coordinate Zn(2+).

The protein belongs to the class-II aminoacyl-tRNA synthetase family. As to quaternary structure, homotetramer. Requires Zn(2+) as cofactor.

It is found in the cytoplasm. The enzyme catalyses tRNA(Ala) + L-alanine + ATP = L-alanyl-tRNA(Ala) + AMP + diphosphate. In terms of biological role, catalyzes the attachment of alanine to tRNA(Ala) in a two-step reaction: alanine is first activated by ATP to form Ala-AMP and then transferred to the acceptor end of tRNA(Ala). Also edits incorrectly charged Ser-tRNA(Ala) and Gly-tRNA(Ala) via its editing domain. This chain is Alanine--tRNA ligase, found in Shigella sonnei (strain Ss046).